Consider the following 1436-residue polypeptide: Non-structural polyprotein 1AB (1436 aa).

Residues 104 to 142 (KLIHKANALQERLRLSQEEKATLALDVQFLQHENVRLKE) are a coiled coil. Transmembrane regions (helical) follow at residues 156–176 (WIIM…YAHS), 239–259 (VFYY…LAIG), 286–306 (VLPT…TLMV), 313–333 (LLAI…LCFM), and 344–364 (GLIA…LTGT). Residues histidine 461, aspartate 489, and serine 551 each act as charge relay system; for serine protease activity in the active site. Positions 587–620 (VKAPSQVELLKEEIERLKAQLNSATENATTVVTQ) form a coiled coil. Tyrosine 693 carries the O-(5'-phospho-RNA)-tyrosine modification. Disordered stretches follow at residues 756–828 (AKPI…YSQT) and 913–934 (SKNK…EDQG). Residues 1181 to 1307 (KHFIEFDWTR…TTPSVPDDYE (127 aa)) enclose the RdRp catalytic domain.

Belongs to the astroviridae polyprotein 1AB family. In terms of assembly, monomer. In terms of processing, cleaved by the viral and host proteases. The protease is probably autocatalytically cleaved.

It is found in the host membrane. It carries out the reaction RNA(n) + a ribonucleoside 5'-triphosphate = RNA(n+1) + diphosphate. In terms of biological role, responsible for the cleavage of the polyprotein into functional products. Its function is as follows. Protein covalently attached to the 5' extremity of the genomic and subgenomic RNAs. It may serve as a primer for the replicase. The chain is Non-structural polyprotein 1AB (ORF1) from Homo sapiens (Human).